A 187-amino-acid polypeptide reads, in one-letter code: uncharacterized protein (187 aa).

A signal peptide spans Met-1–Ala-25.

The protein belongs to the fimbrial protein family.

Part of the yfcOPQRSUV fimbrial operon. Could contribute to adhesion to various surfaces in specific environmental niches. Increases adhesion to eukaryotic T24 bladder epithelial cells in the absence of fim genes. This is an uncharacterized protein from Escherichia coli (strain K12).